The sequence spans 417 residues: Aminoacyltransferase FemB (417 aa).

It belongs to the FemABX family.

It localises to the cytoplasm. It catalyses the reaction MurNAc-L-Ala-D-isoglutaminyl-L-Lys-(N(6)-tri-Gly)-D-Ala-D-Ala-diphospho-di-trans,octa-cis-undecaprenyl-GlcNAc + 2 glycyl-tRNA(Gly) = MurNAc-L-Ala-D-isoglutaminyl-L-Lys-(N(6)-penta-Gly)-D-Ala-D-Ala-diphospho-di-trans,octa-cis-undecaprenyl-GlcNAc + 2 tRNA(Gly) + 2 H(+). In terms of biological role, catalyzes the incorporation of amino acid(s) into the interchain peptide bridge of peptidoglycan, using aminoacyl-tRNA as amino acid donor. This chain is Aminoacyltransferase FemB (femB), found in Staphylococcus epidermidis.